The chain runs to 146 residues: Hemoglobin subunit beta (146 aa).

In terms of domain architecture, Globin spans 2-146 (HWSAEEKQLI…VAHALARKYH (145 aa)). Heme b is bound by residues H63 and H92.

The protein belongs to the globin family. As to quaternary structure, heterotetramer of two alpha chains and two beta chains. In terms of tissue distribution, red blood cells.

Involved in oxygen transport from the lung to the various peripheral tissues. This chain is Hemoglobin subunit beta (HBB), found in Anser anser anser (Western greylag goose).